Here is a 164-residue protein sequence, read N- to C-terminus: Large ribosomal subunit protein bL9 (164 aa).

Belongs to the bacterial ribosomal protein bL9 family.

Its function is as follows. Binds to the 23S rRNA. The polypeptide is Large ribosomal subunit protein bL9 (Borrelia duttonii (strain Ly)).